Here is a 245-residue protein sequence, read N- to C-terminus: Ribosomal RNA large subunit methyltransferase E (245 aa).

The tract at residues 1 to 25 is disordered; that stretch reads MTKSPIGGNRSGRKLGQKVKKGKLK. The segment covering 11–25 has biased composition (basic residues); it reads SGRKLGQKVKKGKLK. S-adenosyl-L-methionine is bound by residues G81, W83, D104, D120, and D144. The Proton acceptor role is filled by K184.

This sequence belongs to the class I-like SAM-binding methyltransferase superfamily. RNA methyltransferase RlmE family.

It is found in the cytoplasm. It carries out the reaction uridine(2552) in 23S rRNA + S-adenosyl-L-methionine = 2'-O-methyluridine(2552) in 23S rRNA + S-adenosyl-L-homocysteine + H(+). Specifically methylates the uridine in position 2552 of 23S rRNA at the 2'-O position of the ribose in the fully assembled 50S ribosomal subunit. The polypeptide is Ribosomal RNA large subunit methyltransferase E (Rhizobium meliloti (strain 1021) (Ensifer meliloti)).